The primary structure comprises 303 residues: Glycine--tRNA ligase alpha subunit (303 aa).

This sequence belongs to the class-II aminoacyl-tRNA synthetase family. As to quaternary structure, tetramer of two alpha and two beta subunits.

The protein resides in the cytoplasm. The enzyme catalyses tRNA(Gly) + glycine + ATP = glycyl-tRNA(Gly) + AMP + diphosphate. In Escherichia coli (strain K12), this protein is Glycine--tRNA ligase alpha subunit (glyQ).